The chain runs to 230 residues: Thioredoxin domain-containing protein PLP3B (230 aa).

In terms of domain architecture, Thioredoxin spans 89–173 (VSEGDFLGEV…GIAMDRLVGF (85 aa)). The segment at 199-230 (EKRKEEDEEDYEYQESIRRSVRSSANVDSDSD) is disordered. The segment covering 220–230 (RSSANVDSDSD) has biased composition (polar residues).

This sequence belongs to the phosducin family. Interacts with TUBB2, TUBB3, TUBB4 and TUBB5. In terms of tissue distribution, expressed in roots, cotyledons, leaves, stems and flowers.

Its subcellular location is the cytoplasm. It localises to the nucleus. Functionally, tubulin-binding protein involved in microtubule formation. The polypeptide is Thioredoxin domain-containing protein PLP3B (PLP3B) (Arabidopsis thaliana (Mouse-ear cress)).